The following is a 206-amino-acid chain: Triosephosphate isomerase (206 aa).

His76 acts as the Electrophile in catalysis. The Proton acceptor role is filled by Glu146.

The protein belongs to the triosephosphate isomerase family. Homodimer.

The catalysed reaction is D-glyceraldehyde 3-phosphate = dihydroxyacetone phosphate. The protein operates within carbohydrate biosynthesis; gluconeogenesis. Its pathway is carbohydrate degradation; glycolysis; D-glyceraldehyde 3-phosphate from glycerone phosphate: step 1/1. The sequence is that of Triosephosphate isomerase (Tpi) from Anopheles merus (Mosquito).